The sequence spans 221 residues: Max dimerization protein 1 (221 aa).

The Nuclear localization signal signature appears at 21–49; it reads RREREAEHGYASMLPYNNKDRDALKRRNK. Disordered stretches follow at residues 30 to 68 and 173 to 204; these read YASM…EKNR and TGDL…YSST. A bHLH domain is found at 56–108; that stretch reads SSRSTHNEMEKNRRAHLRLCLEKLKGLVPLGPESSRHTTLSLLTKAKLHIKKL. The segment covering 175–184 has biased composition (low complexity); the sequence is DLDWSSSSVS. Polar residues predominate over residues 191 to 204; it reads SMQSLGSDEGYSST.

Heterodimer with MAX; the interaction is required for DNA-binding. DNA binding requires dimerization with another bHLH protein; does not form homodimers, and does not bind to DNA in the absence of MAX in vitro. Interacts with RNF17. Ubiquitinated by BIRC2/c-IAP1, leading to its subsequent degradation by the proteasome.

The protein localises to the nucleus. Its function is as follows. Component of a transcriptional repressor complex together with MAX. In complex with MAX binds to the core DNA sequence 5'-CAC[GA]TG-3'. Antagonizes MYC transcriptional activity by competing with MYC for MAX binding. Binds to the TERT promoter and represses telomerase expression, possibly by interfering with MYC binding. In Homo sapiens (Human), this protein is Max dimerization protein 1 (MXD1).